The following is a 374-amino-acid chain: Peptidoglycan recognition protein 4 (374 aa).

The first 20 residues, 1–20 (MLSWLLVFSILVLLAQGVSS), serve as a signal peptide directing secretion. Residues Asn-39, Asn-93, and Asn-146 are each glycosylated (N-linked (GlcNAc...) asparagine). N-acetylmuramoyl-L-alanine amidase domains are found at residues 76–212 (RPVD…KACP) and 233–359 (PAKY…LSPG). Intrachain disulfides connect Cys-211–Cys-333, Cys-227–Cys-271, and Cys-247–Cys-253. A peptidoglycan-binding site is contributed by Tyr-275. Interaction with murein stretches follow at residues 294-303 (QGSKTDSYND) and 354-355 (NT).

The protein belongs to the N-acetylmuramoyl-L-alanine amidase 2 family. In terms of assembly, homodimer; disulfide-linked. Heterodimer with PGLYRP3; disulfide-linked. In terms of tissue distribution, ubiquitous.

It localises to the secreted. Pattern receptor that binds to murein peptidoglycans (PGN) of Gram-positive bacteria. Has bactericidal activity towards Gram-positive bacteria. May kill Gram-positive bacteria by interfering with peptidoglycan biosynthesis. Also binds to Gram-negative bacteria, and has bacteriostatic activity towards Gram-negative bacteria. Plays a role in innate immunity. The polypeptide is Peptidoglycan recognition protein 4 (Pglyrp4) (Mus musculus (Mouse)).